We begin with the raw amino-acid sequence, 450 residues long: tRNA modification GTPase MnmE (450 aa).

(6S)-5-formyl-5,6,7,8-tetrahydrofolate-binding residues include Arg23, Glu80, and Arg123. Residues Gly219–Gly372 form the TrmE-type G domain. Residue Asn229 coordinates K(+). GTP contacts are provided by residues Asn229 to Ser234, Thr248 to Thr254, Asp273 to Gly276, and Ser353 to Arg355. Mg(2+) is bound at residue Ser233. Residues Thr248, Ile250, and Thr253 each contribute to the K(+) site. Thr254 contributes to the Mg(2+) binding site. A (6S)-5-formyl-5,6,7,8-tetrahydrofolate-binding site is contributed by Lys450.

This sequence belongs to the TRAFAC class TrmE-Era-EngA-EngB-Septin-like GTPase superfamily. TrmE GTPase family. Homodimer. Heterotetramer of two MnmE and two MnmG subunits. K(+) is required as a cofactor.

The protein resides in the cytoplasm. Exhibits a very high intrinsic GTPase hydrolysis rate. Involved in the addition of a carboxymethylaminomethyl (cmnm) group at the wobble position (U34) of certain tRNAs, forming tRNA-cmnm(5)s(2)U34. The polypeptide is tRNA modification GTPase MnmE (Bordetella parapertussis (strain 12822 / ATCC BAA-587 / NCTC 13253)).